A 268-amino-acid polypeptide reads, in one-letter code: 4-hydroxy-tetrahydrodipicolinate reductase (268 aa).

Residues 9 to 14, glutamate 35, 99 to 101, and 123 to 126 each bind NAD(+); these read GVCGRM, GTT, and APNY. Histidine 156 acts as the Proton donor/acceptor in catalysis. Histidine 157 provides a ligand contact to (S)-2,3,4,5-tetrahydrodipicolinate. Residue lysine 160 is the Proton donor of the active site. 166 to 167 lines the (S)-2,3,4,5-tetrahydrodipicolinate pocket; it reads GT.

Belongs to the DapB family.

Its subcellular location is the cytoplasm. The enzyme catalyses (S)-2,3,4,5-tetrahydrodipicolinate + NAD(+) + H2O = (2S,4S)-4-hydroxy-2,3,4,5-tetrahydrodipicolinate + NADH + H(+). The catalysed reaction is (S)-2,3,4,5-tetrahydrodipicolinate + NADP(+) + H2O = (2S,4S)-4-hydroxy-2,3,4,5-tetrahydrodipicolinate + NADPH + H(+). It functions in the pathway amino-acid biosynthesis; L-lysine biosynthesis via DAP pathway; (S)-tetrahydrodipicolinate from L-aspartate: step 4/4. In terms of biological role, catalyzes the conversion of 4-hydroxy-tetrahydrodipicolinate (HTPA) to tetrahydrodipicolinate. The chain is 4-hydroxy-tetrahydrodipicolinate reductase from Magnetococcus marinus (strain ATCC BAA-1437 / JCM 17883 / MC-1).